The following is a 158-amino-acid chain: Cyclic pyranopterin monophosphate synthase (158 aa).

Residues 74–76 (MCH) and 112–113 (ME) contribute to the substrate site. D127 is a catalytic residue.

This sequence belongs to the MoaC family. In terms of assembly, homohexamer; trimer of dimers.

The catalysed reaction is (8S)-3',8-cyclo-7,8-dihydroguanosine 5'-triphosphate = cyclic pyranopterin phosphate + diphosphate. Its pathway is cofactor biosynthesis; molybdopterin biosynthesis. Catalyzes the conversion of (8S)-3',8-cyclo-7,8-dihydroguanosine 5'-triphosphate to cyclic pyranopterin monophosphate (cPMP). In Thermoanaerobacter pseudethanolicus (strain ATCC 33223 / 39E) (Clostridium thermohydrosulfuricum), this protein is Cyclic pyranopterin monophosphate synthase.